The sequence spans 142 residues: Small ribosomal subunit protein uS12 (142 aa).

It belongs to the universal ribosomal protein uS12 family. In terms of assembly, part of the 30S ribosomal subunit.

With S4 and S5 plays an important role in translational accuracy. Located at the interface of the 30S and 50S subunits. In Methanococcoides burtonii (strain DSM 6242 / NBRC 107633 / OCM 468 / ACE-M), this protein is Small ribosomal subunit protein uS12.